We begin with the raw amino-acid sequence, 422 residues long: Phospholipase D Z (422 aa).

The signal sequence occupies residues 1–18 (MMMKLLFLIALFGCVVNS). N53 is a glycosylation site (N-linked (GlcNAc...) asparagine). In terms of domain architecture, PLD phosphodiesterase 1 spans 148–175 (GAGILHTKVIVVDQVSAYLGSANLDWRS). Residues H153, K155, and D160 contribute to the active site. N-linked (GlcNAc...) asparagine glycosylation is found at N225 and N320. Positions 357-383 (FTRVNHAKYMVTDEQSYVGTSNWSEDY) constitute a PLD phosphodiesterase 2 domain. Active-site residues include H362, K364, and D369. A glycan (N-linked (GlcNAc...) asparagine) is linked at N378.

Belongs to the phospholipase D family.

The catalysed reaction is a 1,2-diacyl-sn-glycero-3-phosphocholine + H2O = a 1,2-diacyl-sn-glycero-3-phosphate + choline + H(+). Inhibited by butan-1-ol. Functionally, hydrolyzes membrane phospholipids, such as PtdCho (phosphatidylcholine), producing the free headgroup and PtdOH (phosphatidic acid; signaling molecule on its own). This is Phospholipase D Z (pldZ) from Dictyostelium discoideum (Social amoeba).